The primary structure comprises 347 residues: Lipopolysaccharide core heptosyltransferase OpsX (347 aa).

It belongs to the glycosyltransferase 9 family.

It functions in the pathway bacterial outer membrane biogenesis; LPS core biosynthesis. Catalyzes heptose transfer to the lipopolysaccharide core. It transfers the first L-glycero-D-manno-heptose to the phosphorylated 3-deoxy-alpha-D-manno-octulosonic acid (Kdo-P) of the inner core. The chain is Lipopolysaccharide core heptosyltransferase OpsX from Haemophilus influenzae (strain ATCC 51907 / DSM 11121 / KW20 / Rd).